The sequence spans 208 residues: Interleukin-6 (208 aa).

Positions 1-20 (MNSLSTIAFSLGLLLVTATA) are cleaved as a signal peptide. The cysteines at positions 67 and 73 are disulfide-linked. Residue S76 is modified to Phosphoserine. C96 and C106 are disulfide-bonded. An N-linked (GlcNAc...) asparagine glycan is attached at N167.

It belongs to the IL-6 superfamily. In terms of assembly, component of a hexamer of two molecules each of IL6, IL6R and IL6ST; first binds to IL6R to associate with the signaling subunit IL6ST. Interacts with IL6R (via the N-terminal ectodomain); this interaction may be affected by IL6R-binding with SORL1, hence decreasing IL6 cis signaling. Interacts with SORL1 (via the N-terminal ectodomain); this interaction leads to IL6 internalization and lysosomal degradation. May form a trimeric complex with the soluble SORL1 ectodomain and soluble IL6R receptor; this interaction might stabilize circulating IL6, hence promoting IL6 trans signaling.

The protein localises to the secreted. Its function is as follows. Cytokine with a wide variety of biological functions in immunity, tissue regeneration, and metabolism. Binds to IL6R, then the complex associates to the signaling subunit IL6ST/gp130 to trigger the intracellular IL6-signaling pathway. The interaction with the membrane-bound IL6R and IL6ST stimulates 'classic signaling', whereas the binding of IL6 and soluble IL6R to IL6ST stimulates 'trans-signaling'. Alternatively, 'cluster signaling' occurs when membrane-bound IL6:IL6R complexes on transmitter cells activate IL6ST receptors on neighboring receiver cells. In terms of biological role, IL6 is a potent inducer of the acute phase response. Rapid production of IL6 contributes to host defense during infection and tissue injury, but excessive IL6 synthesis is involved in disease pathology. In the innate immune response, is synthesized by myeloid cells, such as macrophages and dendritic cells, upon recognition of pathogens through toll-like receptors (TLRs) at the site of infection or tissue injury. In the adaptive immune response, is required for the differentiation of B cells into immunoglobulin-secreting cells. Plays a major role in the differentiation of CD4(+) T cell subsets. Essential factor for the development of T follicular helper (Tfh) cells that are required for the induction of germinal-center formation. Required to drive naive CD4(+) T cells to the Th17 lineage. Also required for proliferation of myeloma cells and the survival of plasmablast cells. Functionally, acts as an essential factor in bone homeostasis and on vessels directly or indirectly by induction of VEGF, resulting in increased angiogenesis activity and vascular permeability. Induces, through 'trans-signaling' and synergistically with IL1B and TNF, the production of VEGF. Involved in metabolic controls, is discharged into the bloodstream after muscle contraction increasing lipolysis and improving insulin resistance. 'Trans-signaling' in central nervous system also regulates energy and glucose homeostasis. Mediates, through GLP-1, crosstalk between insulin-sensitive tissues, intestinal L cells and pancreatic islets to adapt to changes in insulin demand. Also acts as a myokine. Plays a protective role during liver injury, being required for maintenance of tissue regeneration. Also has a pivotal role in iron metabolism by regulating HAMP/hepcidin expression upon inflammation or bacterial infection. Through activation of IL6ST-YAP-NOTCH pathway, induces inflammation-induced epithelial regeneration. The polypeptide is Interleukin-6 (IL6) (Delphinapterus leucas (Beluga whale)).